The following is a 383-amino-acid chain: Processive diacylglycerol beta-glucosyltransferase (383 aa).

This sequence belongs to the glycosyltransferase 28 family. UgtP subfamily.

The protein resides in the cell membrane. The catalysed reaction is a 1,2-diacyl-3-O-(beta-D-glucopyranosyl)-sn-glycerol + UDP-alpha-D-glucose = a 1,2-diacyl-3-O-(beta-D-Glc-(1-&gt;6)-beta-D-Glc)-sn-glycerol + UDP + H(+). It carries out the reaction a 1,2-diacyl-3-O-(beta-D-Glc-(1-&gt;6)-beta-D-Glc)-sn-glycerol + UDP-alpha-D-glucose = a 1,2-diacyl-3-O-(beta-D-Glc-(1-&gt;6)-beta-D-Glc-(1-&gt;6)-beta-D-Glc)-sn-glycerol + UDP + H(+). The enzyme catalyses a 1,2-diacyl-sn-glycerol + UDP-alpha-D-glucose = a 1,2-diacyl-3-O-(beta-D-glucopyranosyl)-sn-glycerol + UDP + H(+). It functions in the pathway glycolipid metabolism; diglucosyl-diacylglycerol biosynthesis. Functionally, processive glucosyltransferase involved in the biosynthesis of both the bilayer- and non-bilayer-forming membrane glucolipids. Is able to successively transfer up to three glucosyl residues to diacylglycerol (DAG), thereby catalyzing the formation of beta-monoglucosyl-DAG (3-O-(beta-D-glucopyranosyl)-1,2-diacyl-sn-glycerol), beta-diglucosyl-DAG (3-O-(beta-D-glucopyranosyl-beta-(1-&gt;6)-D-glucopyranosyl)-1,2-diacyl-sn-glycerol) and beta-triglucosyl-DAG (3-O-(beta-D-glucopyranosyl-beta-(1-&gt;6)-D-glucopyranosyl-beta-(1-&gt;6)-D-glucopyranosyl)-1,2-diacyl-sn-glycerol). Beta-diglucosyl-DAG is the predominant glycolipid found in Bacillales and is also used as a membrane anchor for lipoteichoic acid (LTA). The sequence is that of Processive diacylglycerol beta-glucosyltransferase from Bacillus pumilus (strain SAFR-032).